A 667-amino-acid polypeptide reads, in one-letter code: DNA ligase (667 aa).

NAD(+) contacts are provided by residues 32-36, 81-82, and E110; these read DSEYD and SL. Residue K112 is the N6-AMP-lysine intermediate of the active site. Residues R133, E167, K283, and K307 each coordinate NAD(+). Residues C401, C404, C419, and C424 each coordinate Zn(2+). The BRCT domain occupies 586-667; that stretch reads EGHPEFSGKT…FVDKQNELNS (82 aa).

It belongs to the NAD-dependent DNA ligase family. LigA subfamily. Requires Mg(2+) as cofactor. The cofactor is Mn(2+).

It catalyses the reaction NAD(+) + (deoxyribonucleotide)n-3'-hydroxyl + 5'-phospho-(deoxyribonucleotide)m = (deoxyribonucleotide)n+m + AMP + beta-nicotinamide D-nucleotide.. Functionally, DNA ligase that catalyzes the formation of phosphodiester linkages between 5'-phosphoryl and 3'-hydroxyl groups in double-stranded DNA using NAD as a coenzyme and as the energy source for the reaction. It is essential for DNA replication and repair of damaged DNA. This is DNA ligase from Staphylococcus aureus (strain bovine RF122 / ET3-1).